Here is a 263-residue protein sequence, read N- to C-terminus: UPF0246 protein Mmar10_0828 (263 aa).

Belongs to the UPF0246 family.

The protein is UPF0246 protein Mmar10_0828 of Maricaulis maris (strain MCS10) (Caulobacter maris).